The sequence spans 778 residues: Beta-phellandrene synthase (neryl-diphosphate-cyclizing), chloroplastic (778 aa).

The transit peptide at 1–36 (MIVGYRSTIITLSHPKLGNGKTISSNAIFQRSCRVR) directs the protein to the chloroplast. Mg(2+) is bound by residues Asp-531, Asn-676, and Glu-684. Positions 531-535 (DDHFE) match the DDXXD motif motif.

The protein belongs to the terpene synthase family. Tpse subfamily. Requires Mg(2+) as cofactor. In terms of tissue distribution, trichomes.

The protein localises to the plastid. The protein resides in the chloroplast. The enzyme catalyses neryl diphosphate = beta-phellandrene + diphosphate. Monoterpene synthase catalyzing the production of beta-phellandrene from neryl diphosphate. Also produces lower amounts of delta-2-carene, alpha-phellandrene and limonene. When incubated in vitro with geranyl diphosphate, catalyzes the formation of acyclic myrcene and ocimene as major products in addition to beta-phellandrene. The polypeptide is Beta-phellandrene synthase (neryl-diphosphate-cyclizing), chloroplastic (PHS1) (Solanum lycopersicum (Tomato)).